Reading from the N-terminus, the 152-residue chain is Large ribosomal subunit protein uL15 (152 aa).

The interval 1–57 (MTSTLNTLKSNSGSRKKKLRKGRGIAAGQGASCGFGMRGQKSRSGRPTRPGFEGGQM) is disordered. The span at 14–23 (SRKKKLRKGR) shows a compositional bias: basic residues. A compositionally biased stretch (gly residues) spans 25-37 (IAAGQGASCGFGM).

It belongs to the universal ribosomal protein uL15 family. As to quaternary structure, part of the 50S ribosomal subunit.

Binds to the 23S rRNA. The sequence is that of Large ribosomal subunit protein uL15 from Prochlorococcus marinus (strain MIT 9301).